A 911-amino-acid polypeptide reads, in one-letter code: DNA mismatch repair protein MutS (911 aa).

The tract at residues 1-95 (MALQGNLFGD…PWSHHSQVTP (95 aa)) is disordered. The segment covering 23-42 (KRQDEPDQLDDHELTQDAKQ) has biased composition (basic and acidic residues). 727–734 (GPNASGKS) lines the ATP pocket.

It belongs to the DNA mismatch repair MutS family.

Functionally, this protein is involved in the repair of mismatches in DNA. It is possible that it carries out the mismatch recognition step. This protein has a weak ATPase activity. This is DNA mismatch repair protein MutS from Synechococcus sp. (strain CC9311).